Consider the following 352-residue polypeptide: Ferredoxin--NADP reductase 2 (352 aa).

FAD is bound by residues E36, K44, Y48, I88, L123, D290, and S331.

Belongs to the ferredoxin--NADP reductase type 2 family. As to quaternary structure, homodimer. It depends on FAD as a cofactor.

It carries out the reaction 2 reduced [2Fe-2S]-[ferredoxin] + NADP(+) + H(+) = 2 oxidized [2Fe-2S]-[ferredoxin] + NADPH. This Exiguobacterium sibiricum (strain DSM 17290 / CCUG 55495 / CIP 109462 / JCM 13490 / 255-15) protein is Ferredoxin--NADP reductase 2.